A 344-amino-acid chain; its full sequence is MDTITLLQPDDWHAHLRDGLALKRTVPDLAQQFARAICMPNLVPPVKTVDEAEAYRERIMAHVPEGVHFDPRMVLYFTDHTSPSEVKKIKDSAHVNAIKLYPAGATTNSDNGVSDIRKVYAVIEQLEEHQVPLLLHGEVTHHHVDIFDREKRFLDEVLSPLLKQFPKLKLVLEHITTSEAAHFVLEQDRNVAATITPQHLLFNRNDMLVGGIKPHFYCLPILKRQTHQQTLIEVATSGNPKFFLGTDSAPHSKNAKENACGCAGCYSAPTAIELYAQAFDQVNKIERLEGFASHFGADFYGLPRNTNTITLVKEDQIIPEQLDYLDDEKIIPLYAGKTIQWRKV.

H13 and H15 together coordinate Zn(2+). Residues 15–17 and N41 contribute to the substrate site; that span reads HLR. Residues K99, H136, and H174 each contribute to the Zn(2+) site. N6-carboxylysine is present on K99. H136 lines the substrate pocket. L219 lines the substrate pocket. D247 provides a ligand contact to Zn(2+). Residue D247 is part of the active site. Substrate-binding residues include H251 and A263.

It belongs to the metallo-dependent hydrolases superfamily. DHOase family. Class II DHOase subfamily. As to quaternary structure, homodimer. Zn(2+) is required as a cofactor.

The enzyme catalyses (S)-dihydroorotate + H2O = N-carbamoyl-L-aspartate + H(+). It functions in the pathway pyrimidine metabolism; UMP biosynthesis via de novo pathway; (S)-dihydroorotate from bicarbonate: step 3/3. Functionally, catalyzes the reversible cyclization of carbamoyl aspartate to dihydroorotate. In Acinetobacter baylyi (strain ATCC 33305 / BD413 / ADP1), this protein is Dihydroorotase.